Consider the following 480-residue polypeptide: uncharacterized protein (480 aa).

The tract at residues M1–H20 is disordered.

This is an uncharacterized protein from Arabidopsis thaliana (Mouse-ear cress).